The chain runs to 496 residues: Chromosomal replication initiator protein DnaA (496 aa).

The interval 1-76 is domain I, interacts with DnaA modulators; that stretch reads MKMDSAVSEE…TELWQEENPQ (76 aa). The segment at 76–150 is domain II; that stretch reads QILKVEVVVR…AAATDAVLGS (75 aa). A domain III, AAA+ region region spans residues 151–373; it reads PLDPRYTFDT…GAFNQLLFRQ (223 aa). 4 residues coordinate ATP: glycine 197, glycine 199, lysine 200, and threonine 201. Residues 374 to 496 form a domain IV, binds dsDNA region; sequence SFEPNISIDR…LKRLINDQAA (123 aa).

It belongs to the DnaA family. Oligomerizes as a right-handed, spiral filament on DNA at oriC.

Its subcellular location is the cytoplasm. Its function is as follows. Plays an essential role in the initiation and regulation of chromosomal replication. ATP-DnaA binds to the origin of replication (oriC) to initiate formation of the DNA replication initiation complex once per cell cycle. Binds the DnaA box (a 9 base pair repeat at the origin) and separates the double-stranded (ds)DNA. Forms a right-handed helical filament on oriC DNA; dsDNA binds to the exterior of the filament while single-stranded (ss)DNA is stabiized in the filament's interior. The ATP-DnaA-oriC complex binds and stabilizes one strand of the AT-rich DNA unwinding element (DUE), permitting loading of DNA polymerase. After initiation quickly degrades to an ADP-DnaA complex that is not apt for DNA replication. Binds acidic phospholipids. This is Chromosomal replication initiator protein DnaA from Brucella suis biovar 1 (strain 1330).